Here is a 622-residue protein sequence, read N- to C-terminus: Probable ATP-dependent RNA helicase DDX41 (622 aa).

Positions 1–15 are enriched in basic and acidic residues; that stretch reads MEESEPERKRARTDE. Disordered stretches follow at residues 1-39 and 52-84; these read MEESEPERKRARTDEVPAGGSRSEAEDEDDEDYVPYVPL and QRRRKGAAEEEQQDSGSEPRGDEDDIPLGPQSN. A Phosphoserine modification is found at serine 4. The residue at position 9 (lysine 9) is an N6-acetyllysine. Residue lysine 9 forms a Glycyl lysine isopeptide (Lys-Gly) (interchain with G-Cter in ubiquitin) linkage. 2 positions are modified to phosphoserine: serine 21 and serine 23. At tyrosine 33 the chain carries Phosphotyrosine. Lysine 115 is covalently cross-linked (Glycyl lysine isopeptide (Lys-Gly) (interchain with G-Cter in ubiquitin)). A Q motif motif is present at residues 181 to 209; the sequence is KSFKEMKFPAAILRGLKKKGIHHPTPIQI. The Helicase ATP-binding domain maps to 212 to 396; that stretch reads IPTILSGRDM…KSALVKPVTI (185 aa). ATP is bound at residue 225–232; that stretch reads AFTGSGKT. The short motif at 344–347 is the DEAD box element; the sequence is DEAD. The Helicase C-terminal domain maps to 407–567; that stretch reads DVIQEVEYVK…KVPPVLQVLH (161 aa). Tyrosine 414 carries the phosphotyrosine; by BTK modification. Residues lysine 416 and lysine 442 each participate in a glycyl lysine isopeptide (Lys-Gly) (interchain with G-Cter in SUMO2) cross-link. The CCHC-type zinc finger occupies 580–597; that stretch reads RGCAFCGGLGHRITDCPK.

The protein belongs to the DEAD box helicase family. DDX41 subfamily. In terms of assembly, identified in the spliceosome C complex. Interacts with ERCC6. Interacts with FAM50A. Interacts with STING1. Interacts with CGAS. Interacts with several spliceosomes components such as PRP19 or CDC5L. Post-translationally, acetylation at Lys-9 regulates the nuclear/cytoplasmic localization. Phosphorylated by BTK; phosphorylation induces binding to dsDNA and STING1. In terms of processing, 'Lys-48'-linked ubiquitinated and degraded by TRIM21 leading to negative regulation of the innate immune response to intracellular dsDNA.

It is found in the nucleus. Its subcellular location is the cytoplasm. The catalysed reaction is ATP + H2O = ADP + phosphate + H(+). Its function is as follows. Multifunctional protein that participates in many aspects of cellular RNA metabolism. Plays pivotal roles in innate immune sensing and hematopoietic homeostasis. Recognizes foreign or self-nucleic acids generated during microbial infection, thereby initiating anti-pathogen responses. Mechanistically, phosphorylation by BTK allows binding to dsDNA leading to interaction with STING1. Modulates the homeostasis of dsDNA through its ATP-dependent DNA-unwinding activity and ATP-independent strand-annealing activity. In turn, induces STING1-mediated type I interferon and cytokine responses to DNA and DNA viruses. Selectively modulates the transcription of certain immunity-associated genes by regulating their alternative splicing. Binds to RNA (R)-loops, structures consisting of DNA/RNA hybrids and a displaced strand of DNA that occur during transcription, and prevents their accumulation, thereby maintaining genome stability. Also participates in pre-mRNA splicing, translational regulation and snoRNA processing, which is essential for ribosome biogenesis. This is Probable ATP-dependent RNA helicase DDX41 (DDX41) from Homo sapiens (Human).